A 300-amino-acid polypeptide reads, in one-letter code: B3 domain-containing protein At5g57720 (300 aa).

The segment at residues 11 to 105 (PDFLKIFNSH…SFWVRIHRNG (95 aa)) is a DNA-binding region (TF-B3). Residues 115–142 (KIQEISDDEDETNGDGDPHMEEEGDTDE) form a disordered region. Acidic residues predominate over residues 119-129 (ISDDEDETNGD).

It is found in the nucleus. This Arabidopsis thaliana (Mouse-ear cress) protein is B3 domain-containing protein At5g57720.